Here is a 249-residue protein sequence, read N- to C-terminus: MANDLLDNKGRGEAGWSWPAIHPEGRKYGLVVAAASLVTAFLAWETIAWPLAFLALGVLAFFRDPERIVPHDEKAIVSPADGMVSLISEVEPPPELAMADAAGNPGLGDAPLTRISIFMSVFDVHINRTPIAGQVSRLIYVPGKFLNADLDKASEENERQHLLVSRPDGLQIGFTQIAGLVARRIVPFVKQGDIVAVGQRIGLIRFGSRVDVYLPAGTAPAVIKGQKVVAGETVLARVGENRLLEGSAQ.

Ser208 serves as the catalytic Schiff-base intermediate with substrate; via pyruvic acid. At Ser208 the chain carries Pyruvic acid (Ser); by autocatalysis.

The protein belongs to the phosphatidylserine decarboxylase family. PSD-A subfamily. Heterodimer of a large membrane-associated beta subunit and a small pyruvoyl-containing alpha subunit. Requires pyruvate as cofactor. Is synthesized initially as an inactive proenzyme. Formation of the active enzyme involves a self-maturation process in which the active site pyruvoyl group is generated from an internal serine residue via an autocatalytic post-translational modification. Two non-identical subunits are generated from the proenzyme in this reaction, and the pyruvate is formed at the N-terminus of the alpha chain, which is derived from the carboxyl end of the proenzyme. The post-translation cleavage follows an unusual pathway, termed non-hydrolytic serinolysis, in which the side chain hydroxyl group of the serine supplies its oxygen atom to form the C-terminus of the beta chain, while the remainder of the serine residue undergoes an oxidative deamination to produce ammonia and the pyruvoyl prosthetic group on the alpha chain.

The protein resides in the cell membrane. It carries out the reaction a 1,2-diacyl-sn-glycero-3-phospho-L-serine + H(+) = a 1,2-diacyl-sn-glycero-3-phosphoethanolamine + CO2. The protein operates within phospholipid metabolism; phosphatidylethanolamine biosynthesis; phosphatidylethanolamine from CDP-diacylglycerol: step 2/2. In terms of biological role, catalyzes the formation of phosphatidylethanolamine (PtdEtn) from phosphatidylserine (PtdSer). The chain is Phosphatidylserine decarboxylase proenzyme from Erythrobacter litoralis (strain HTCC2594).